A 1322-amino-acid chain; its full sequence is Phosphoribosylformylglycinamidine synthase (1322 aa).

ATP is bound at residue 300–311 (GASTGAGGEIRD). The span at 593 to 608 (QQTPQRANHTETSPTP) shows a compositional bias: polar residues. The disordered stretch occupies residues 593 to 613 (QQTPQRANHTETSPTPNTLPP). A702 provides a ligand contact to ATP. Mg(2+)-binding residues include D703, E742, N746, and D915. S917 provides a ligand contact to ATP. The Glutamine amidotransferase type-1 domain maps to 1073–1322 (VAILREQGIN…LFRNARAWVG (250 aa)). Catalysis depends on C1166, which acts as the Nucleophile. Catalysis depends on residues H1287 and E1289.

This sequence in the N-terminal section; belongs to the FGAMS family. In terms of assembly, monomer.

It is found in the cytoplasm. The enzyme catalyses N(2)-formyl-N(1)-(5-phospho-beta-D-ribosyl)glycinamide + L-glutamine + ATP + H2O = 2-formamido-N(1)-(5-O-phospho-beta-D-ribosyl)acetamidine + L-glutamate + ADP + phosphate + H(+). It participates in purine metabolism; IMP biosynthesis via de novo pathway; 5-amino-1-(5-phospho-D-ribosyl)imidazole from N(2)-formyl-N(1)-(5-phospho-D-ribosyl)glycinamide: step 1/2. Functionally, phosphoribosylformylglycinamidine synthase involved in the purines biosynthetic pathway. Catalyzes the ATP-dependent conversion of formylglycinamide ribonucleotide (FGAR) and glutamine to yield formylglycinamidine ribonucleotide (FGAM) and glutamate. The sequence is that of Phosphoribosylformylglycinamidine synthase from Xylella fastidiosa (strain 9a5c).